A 342-amino-acid chain; its full sequence is Prenyl transferase penC (342 aa).

A helical membrane pass occupies residues 17–37 (LSYLTLTVGALALVVVLYISI). Isopentenyl diphosphate is bound at residue histidine 110. Mg(2+) is bound by residues aspartate 117 and aspartate 121. Arginine 126 is a binding site for dimethylallyl diphosphate. A glycan (N-linked (GlcNAc...) asparagine) is linked at asparagine 154. Lysine 210 contacts dimethylallyl diphosphate.

The protein belongs to the FPP/GGPP synthase family.

It is found in the membrane. Its pathway is secondary metabolite biosynthesis. In terms of biological role, prenyl transferase; part of the gene cluster that mediates the biosynthesis of the indole diterpenes penitrems. The geranylgeranyl diphosphate (GGPP) synthase penG catalyzes the first step in penitrem biosynthesis via conversion of farnesyl pyrophosphate and isopentyl pyrophosphate into geranylgeranyl pyrophosphate (GGPP). Condensation of indole-3-glycerol phosphate with GGPP by the prenyl transferase penC then forms 3-geranylgeranylindole (3-GGI). Epoxidation by the FAD-dependent monooxygenase penM leads to a epoxidized-GGI that is substrate of the terpene cyclase penB for cyclization to yield paspaline. Paspaline is subsequently converted to 13-desoxypaxilline by the cytochrome P450 monooxygenase penP, the latter being then converted to paxilline by the cytochrome P450 monooxygenase penQ. Paxilline is converted to beta-paxitriol via C-10 ketoreduction by the short-chain dehydrogenase PC-15 which can be monoprenylated at the C-20 by the indole diterpene prenyltransferase penD. A two-step elimination (acetylation and elimination) process performed by the O-acetyltransferase PC-16 and the P.simplicissimum ptmI-ortholog not yet identified in P.crustosum, leads to the production of the prenylated form of penijanthine. The FAD-linked oxidoreductase ptmO then converts the prenylated form of penijanthine into PC-M5 which is in turn transformed into PC-M4 by the aromatic dimethylallyltransferase PC-22. A series of oxidation steps involving 4 cytochrome P450 monooxygenases (PC-21, PC-05, PC-23, PC-20) and a FAD-dependent monooxygenase (PC-14) are required for the transformation of PC-M4 to penitrems A and E. Synthesis of these final products is proposed to proceed via penitrems D and C (PC-21, PC-05, PC-14) and penitrems B and F (PC-21, PC-05, PC-14, PC-23). This chain is Prenyl transferase penC, found in Penicillium crustosum (Blue mold fungus).